A 635-amino-acid chain; its full sequence is Transcription termination factor FttA (635 aa).

KHa stretches follow at residues 1–69 and 4–69; these read MSAE…PSVL and EDIL…PSVL. Residues 70–137 form a KHb region; the sequence is VEPDIAKDKI…WAPKPVRTPP (68 aa). 2 metallo-beta-lactamase N-terminus regions span residues 179–382 and 179–383; these read WVRT…YGGY and WVRT…GGYD. Beta-Casp regions lie at residues 180-577 and 383-576; these read VRTS…GFSG and DDVL…EGFS. Positions 241, 243, 245, 246, 328, and 351 each coordinate Zn(2+). Metallo-beta-lactamase C-terminus stretches follow at residues 577-635 and 578-635; these read GHSD…IRLR and HSDR…IRLR. His602 contacts Zn(2+).

The protein belongs to the metallo-beta-lactamase superfamily. RNA-metabolizing metallo-beta-lactamase-like family. FttA subfamily. In terms of assembly, homodimer. Interacts with RNA polymerase (RNAP); interaction is not dependent on DNA or RNA. Interacts with the Spt4-Spt5 complex. Requires Zn(2+) as cofactor.

The protein localises to the chromosome. In terms of biological role, terminates transcription on the whole genome. Termination is linked to FttA-mediated RNA cleavage and does not require NTP hydrolysis. Cleaves endonucleolytically at the RNA exit channel of RNA polymerase (RNAP); the 5'-3' exonuclease activity of this protein degrades the nascent RNA released from RNAP. Terminates transcription genome-wide. Transcription termination is most effective in vivo on RNAs with more than one U4-tract in their 3'-ends (including non-protein coding RNAs); U4-tracts are recognized by this protein. Also plays a role in termination of RNAs without U-tracts by an unknown mechanism. Has endonuclease activity after U-rich tracts in transcription termination sites. Binds RNA at U4-tracts found directly upstream of the experimentally determined transcription termination sites; binds preferentially to RNAs with more U4-tracts at their 3'-ends. The chain is Transcription termination factor FttA from Methanococcus maripaludis (strain DSM 14266 / JCM 13030 / NBRC 101832 / S2 / LL).